The primary structure comprises 317 residues: Aspartate carbamoyltransferase catalytic subunit (317 aa).

Carbamoyl phosphate-binding residues include Arg66 and Thr67. Residue Lys94 participates in L-aspartate binding. Carbamoyl phosphate-binding residues include Arg116, His144, and Gln147. Residues Arg177 and Arg231 each contribute to the L-aspartate site. The carbamoyl phosphate site is built by Gly272 and Pro273.

Belongs to the aspartate/ornithine carbamoyltransferase superfamily. ATCase family. In terms of assembly, heterododecamer (2C3:3R2) of six catalytic PyrB chains organized as two trimers (C3), and six regulatory PyrI chains organized as three dimers (R2).

It carries out the reaction carbamoyl phosphate + L-aspartate = N-carbamoyl-L-aspartate + phosphate + H(+). The protein operates within pyrimidine metabolism; UMP biosynthesis via de novo pathway; (S)-dihydroorotate from bicarbonate: step 2/3. Its function is as follows. Catalyzes the condensation of carbamoyl phosphate and aspartate to form carbamoyl aspartate and inorganic phosphate, the committed step in the de novo pyrimidine nucleotide biosynthesis pathway. This chain is Aspartate carbamoyltransferase catalytic subunit, found in Beijerinckia indica subsp. indica (strain ATCC 9039 / DSM 1715 / NCIMB 8712).